Here is a 397-residue protein sequence, read N- to C-terminus: MAIESIKNRFAPVLAKREAEALYRRRPLVTSPQTAEMQINGLQVINFSSNDYLGLANHPALKHSCETIQDLSYGSGAAHLVTGHHLEHHLLEDELADWLGCERALLFSTGYMANLAVQQTLMQKGDWILADKLNHASLIDGARYSEADLKRYPHLDMQALEKRLQKAQQENRQCLIVTDGVFSMDGDCAPLQTIQALAKTYQAWLFLDDAHGFGTLGEQGKGTLAHFNLTPDENTIIMGTLGKAFGASGAFVAGSEVLVETLIQMARPYIYTTAMPPINARVARTALKQVQQADAEREQLKRNIQHFQTGANQLGLTLWPSDSAIQPIMLGRSAQAIQWSEALKQKGLWVTAIRPPTVPKNTARLRVTLSAAHTAEHIEKLLQALAQCQDDFPSSNT.

Residue R24 coordinates substrate. G110–Y111 lines the pyridoxal 5'-phosphate pocket. H135 contacts substrate. S183, H211, and T240 together coordinate pyridoxal 5'-phosphate. K243 carries the post-translational modification N6-(pyridoxal phosphate)lysine. T357 contributes to the substrate binding site.

The protein belongs to the class-II pyridoxal-phosphate-dependent aminotransferase family. BioF subfamily. Homodimer. Requires pyridoxal 5'-phosphate as cofactor.

The enzyme catalyses 6-carboxyhexanoyl-[ACP] + L-alanine + H(+) = (8S)-8-amino-7-oxononanoate + holo-[ACP] + CO2. It functions in the pathway cofactor biosynthesis; biotin biosynthesis. In terms of biological role, catalyzes the decarboxylative condensation of pimeloyl-[acyl-carrier protein] and L-alanine to produce 8-amino-7-oxononanoate (AON), [acyl-carrier protein], and carbon dioxide. The chain is 8-amino-7-oxononanoate synthase from Hydrogenovibrio crunogenus (strain DSM 25203 / XCL-2) (Thiomicrospira crunogena).